A 427-amino-acid chain; its full sequence is Glutamate-1-semialdehyde 2,1-aminomutase (427 aa).

At K267 the chain carries N6-(pyridoxal phosphate)lysine.

This sequence belongs to the class-III pyridoxal-phosphate-dependent aminotransferase family. HemL subfamily. Homodimer. The cofactor is pyridoxal 5'-phosphate.

It is found in the cytoplasm. The enzyme catalyses (S)-4-amino-5-oxopentanoate = 5-aminolevulinate. The protein operates within porphyrin-containing compound metabolism; protoporphyrin-IX biosynthesis; 5-aminolevulinate from L-glutamyl-tRNA(Glu): step 2/2. The sequence is that of Glutamate-1-semialdehyde 2,1-aminomutase from Geotalea daltonii (strain DSM 22248 / JCM 15807 / FRC-32) (Geobacter daltonii).